The following is a 159-amino-acid chain: Cytochrome c-type biogenesis protein CcmE (159 aa).

Residues 1–8 (MNIRRKNR) lie on the Cytoplasmic side of the membrane. Residues 9–29 (LWIACAVLAGLALTIGLVLYA) form a helical; Signal-anchor for type II membrane protein membrane-spanning segment. The Periplasmic portion of the chain corresponds to 30–159 (LRSNIDLFYT…PASVYKDPAS (130 aa)). 2 residues coordinate heme: H130 and Y134. The span at 132 to 147 (ENYTPPEVEKAMEANH) shows a compositional bias: basic and acidic residues. Residues 132 to 159 (ENYTPPEVEKAMEANHRRPASVYKDPAS) form a disordered region.

The protein belongs to the CcmE/CycJ family.

The protein resides in the cell inner membrane. In terms of biological role, heme chaperone required for the biogenesis of c-type cytochromes. Transiently binds heme delivered by CcmC and transfers the heme to apo-cytochromes in a process facilitated by CcmF and CcmH. The sequence is that of Cytochrome c-type biogenesis protein CcmE from Shigella sonnei (strain Ss046).